The primary structure comprises 317 residues: Ribosomal RNA small subunit methyltransferase H (317 aa).

S-adenosyl-L-methionine contacts are provided by residues glycine 30 to histidine 32, aspartate 50, tyrosine 78, aspartate 95, and glutamine 102.

This sequence belongs to the methyltransferase superfamily. RsmH family.

It localises to the cytoplasm. The catalysed reaction is cytidine(1402) in 16S rRNA + S-adenosyl-L-methionine = N(4)-methylcytidine(1402) in 16S rRNA + S-adenosyl-L-homocysteine + H(+). Functionally, specifically methylates the N4 position of cytidine in position 1402 (C1402) of 16S rRNA. The chain is Ribosomal RNA small subunit methyltransferase H from Nitrosomonas eutropha (strain DSM 101675 / C91 / Nm57).